The sequence spans 335 residues: Deoxyhypusine hydroxylase (335 aa).

HEAT-like PBS-type repeat units follow at residues 71–97 (LKHE…VAKD), 104–130 (CRHE…LRDN), 200–233 (LRYR…GLKD), 238–264 (FRHE…ALSN), and 271–298 (VRHE…FLND). His73, Glu74, His106, and Glu107 together coordinate Fe cation. Fe cation contacts are provided by His240, Glu241, His273, and Glu274.

The protein belongs to the deoxyhypusine hydroxylase family. Requires Fe(2+) as cofactor.

Its subcellular location is the cytoplasm. The protein localises to the nucleus. The enzyme catalyses [eIF5A protein]-deoxyhypusine + AH2 + O2 = [eIF5A protein]-hypusine + A + H2O. It participates in protein modification; eIF5A hypusination. In terms of biological role, catalyzes the hydroxylation of the N(6)-(4-aminobutyl)-L-lysine intermediate to form hypusine, an essential post-translational modification only found in mature eIF-5A factor. The polypeptide is Deoxyhypusine hydroxylase (lia1) (Aspergillus fumigatus (strain ATCC MYA-4609 / CBS 101355 / FGSC A1100 / Af293) (Neosartorya fumigata)).